The primary structure comprises 271 residues: Putative phosphoenolpyruvate synthase regulatory protein (271 aa).

151–158 (GVSRSGKT) lines the ADP pocket.

It belongs to the pyruvate, phosphate/water dikinase regulatory protein family. PSRP subfamily.

The catalysed reaction is [pyruvate, water dikinase] + ADP = [pyruvate, water dikinase]-phosphate + AMP + H(+). It carries out the reaction [pyruvate, water dikinase]-phosphate + phosphate + H(+) = [pyruvate, water dikinase] + diphosphate. Bifunctional serine/threonine kinase and phosphorylase involved in the regulation of the phosphoenolpyruvate synthase (PEPS) by catalyzing its phosphorylation/dephosphorylation. The chain is Putative phosphoenolpyruvate synthase regulatory protein from Burkholderia multivorans (strain ATCC 17616 / 249).